The following is a 117-amino-acid chain: Probable non-functional immunoglobulin heavy variable 1-38-4 (117 aa).

An N-terminal signal peptide occupies residues 1–19 (MDWNWRILFLVVATTGAHS). Positions 20–44 (QVQLVQSWAEVRKSGASVKVSCSFS) are framework-1. The region spanning 20–117 (QVQLVQSWAE…EDMAVYYYAR (98 aa)) is the Ig-like domain. The tract at residues 45-52 (GFTITSYG) is complementarity-determining-1. The segment at 53–69 (IHWVQQSPGQGLEWMGW) is framework-2. The complementarity-determining-2 stretch occupies residues 70–77 (INPGNGSP). N74 carries an N-linked (GlcNAc...) asparagine glycan. Residues 78–115 (SYAKKFQGRFTMTRDMSTTTAYTDLSSLTSEDMAVYYY) form a framework-3 region. The tract at residues 116–117 (AR) is complementarity-determining-3.

In terms of assembly, most probably, the immunoglobulin is not assembled due to incorrect folding of heavy chain. Immunoglobulins are composed of two identical heavy chains and two identical light chains; disulfide-linked.

It is found in the secreted. It localises to the cell membrane. Probable non-functional open reading frame (ORF) of V region of the variable domain of immunoglobulin heavy chains. Non-functional ORF generally cannot participate in the synthesis of a productive immunoglobulin chain due to altered V-(D)-J or switch recombination and/or splicing site (at mRNA level) and/or conserved amino acid change (protein level). Immunoglobulins, also known as antibodies, are membrane-bound or secreted glycoproteins produced by B lymphocytes. In the recognition phase of humoral immunity, the membrane-bound immunoglobulins serve as receptors which, upon binding of a specific antigen, trigger the clonal expansion and differentiation of B lymphocytes into immunoglobulins-secreting plasma cells. Secreted immunoglobulins mediate the effector phase of humoral immunity, which results in the elimination of bound antigens. The antigen binding site is formed by the variable domain of one heavy chain, together with that of its associated light chain. Thus, each immunoglobulin has two antigen binding sites with remarkable affinity for a particular antigen. The variable domains are assembled by a process called V-(D)-J rearrangement and can then be subjected to somatic hypermutations which, after exposure to antigen and selection, allow affinity maturation for a particular antigen. The polypeptide is Probable non-functional immunoglobulin heavy variable 1-38-4 (Homo sapiens (Human)).